Reading from the N-terminus, the 194-residue chain is MALRELKVCLLGDTGVGKSSIVWRFVEDSFDPNINPTIGASFMTKTVQYQNELHKFLIWDTAGQERFRALAPMYYRGSAAAIIVYDITKEETFSTLKNWVKELRQHGPPNIVVAIAGNKCDLIDVREVMERDAKDYADSIHAIFVETSAKNAININELFIEISRRIPSTDANLPSGGKGFKLRRQPSEPKRSCC.

12-20 (GDTGVGKSS) is a binding site for GTP. The short motif at 34 to 42 (INPTIGASF) is the Effector region element. GTP-binding positions include 60–64 (DTAGQ), 118–121 (NKCD), and 148–150 (SAK). The disordered stretch occupies residues 174–194 (PSGGKGFKLRRQPSEPKRSCC). Basic and acidic residues predominate over residues 185–194 (QPSEPKRSCC). 2 S-geranylgeranyl cysteine lipidation sites follow: Cys-193 and Cys-194.

It belongs to the small GTPase superfamily. Rab family. Interacts directly with ZFYVE20. Binds EEA1. Interacts (in its GTP-bound form) with RABGEF1. Interacts (in its GTP-bound form) with RINL.

It is found in the endosome membrane. The protein resides in the cell membrane. The protein localises to the early endosome. Its subcellular location is the late endosome. It localises to the cell projection. It is found in the ruffle. The protein resides in the cytoplasmic vesicle. The protein localises to the phagosome. Its subcellular location is the phagosome membrane. In terms of biological role, plays a role in endocytosis and intracellular protein transport. Mediates trafficking of TF from early endosomes to recycling endosomes. Required for NGF-mediated endocytosis of NTRK1, and subsequent neurite outgrowth. Binds GTP and GDP and has low GTPase activity. Alternates between a GTP-bound active form and a GDP-bound inactive form. The sequence is that of Ras-related protein Rab-22A (RAB22A) from Homo sapiens (Human).